Consider the following 260-residue polypeptide: uncharacterized protein (260 aa).

The signal sequence occupies residues methionine 1–glycine 22. A lipid anchor (N-palmitoyl cysteine) is attached at cysteine 23. A lipid anchor (S-diacylglycerol cysteine) is attached at cysteine 23.

The protein belongs to the staphylococcal tandem lipoprotein family.

It is found in the cell membrane. This is an uncharacterized protein from Staphylococcus aureus (strain bovine RF122 / ET3-1).